We begin with the raw amino-acid sequence, 299 residues long: MAAAEEDYGVGAEADRELEELLESALDDFDKAKPSPAPPSTTTAPDASGPQKRSPGDTAKDSLFASQEKFFQELFDSELASQATAEFEKAMKELAEEEPHLVEQFQKLSEAAGRVGSDMTSQQEFTSCLKETLSGLAKNATDLQNSGMSEEELTKAMEGLGMDEGDGEGNILPIMQSIMQNLLSKDVLYPSLKEITEKYPEWLQSHRESLPPEQFEKYQEQHSVMCKICEQFEAETPTDSETTQKARFEMVLDLMQQLQDLGHPPKELAGEMPPGLNFDLDALNLSGPPGASGEQCLIM.

Residues 1–63 (MAAAEEDYGV…SPGDTAKDSL (63 aa)) are disordered. Alanine 2 is modified (N-acetylalanine). A docking to the peroxisome membrane and binding to PEX3 region spans residues 2–56 (AAAEEDYGVGAEADRELEELLESALDDFDKAKPSPAPPSTTTAPDASGPQKRSPG). The tract at residues 2 to 91 (AAAEEDYGVG…QATAEFEKAM (90 aa)) is necessary for PEX19 function on peroxisome biogenesis. The span at 16–27 (RELEELLESALD) shows a compositional bias: acidic residues. 3 positions are modified to phosphoserine: serine 35, serine 54, and serine 66. The residue at position 236 (threonine 236) is a Phosphothreonine. Cysteine 296 carries the post-translational modification Cysteine methyl ester. The S-farnesyl cysteine moiety is linked to residue cysteine 296. A propeptide spans 297–299 (LIM) (removed in mature form).

This sequence belongs to the peroxin-19 family. In terms of assembly, interacts with a broad range of peroxisomal membrane proteins, including PEX3, PEX10, PEX11A, PEX11B, PEX12, PEX13, PEX14 and PEX16, PXMP2/PMP22, PXMP4/PMP24, SLC25A17/PMP34, ABCD1/ALDP, ABCD2/ALDRP, and ABCD3/PMP70. Also interacts with the tumor suppressor CDKN2A/p19ARF.

The protein localises to the cytoplasm. It is found in the peroxisome membrane. Necessary for early peroxisomal biogenesis. Acts both as a cytosolic chaperone and as an import receptor for peroxisomal membrane proteins (PMPs). Binds and stabilizes newly synthesized PMPs in the cytoplasm by interacting with their hydrophobic membrane-spanning domains, and targets them to the peroxisome membrane by binding to the integral membrane protein PEX3. Excludes CDKN2A from the nucleus and prevents its interaction with MDM2, which results in active degradation of TP53. The protein is Peroxisomal biogenesis factor 19 (PEX19) of Pongo abelii (Sumatran orangutan).